The chain runs to 325 residues: Replication factor C small subunit (325 aa).

An ATP-binding site is contributed by 52-59 (GPAGVGKT).

Belongs to the activator 1 small subunits family. RfcS subfamily. Heteromultimer composed of small subunits (RfcS) and large subunits (RfcL).

Part of the RFC clamp loader complex which loads the PCNA sliding clamp onto DNA. This chain is Replication factor C small subunit, found in Natronomonas pharaonis (strain ATCC 35678 / DSM 2160 / CIP 103997 / JCM 8858 / NBRC 14720 / NCIMB 2260 / Gabara) (Halobacterium pharaonis).